The sequence spans 451 residues: NADP-specific glutamate dehydrogenase (451 aa).

The active site involves Lys-113. Position 252 is a phosphoserine (Ser-252).

This sequence belongs to the Glu/Leu/Phe/Val dehydrogenases family. In terms of assembly, homohexamer.

It catalyses the reaction L-glutamate + NADP(+) + H2O = 2-oxoglutarate + NH4(+) + NADPH + H(+). This is NADP-specific glutamate dehydrogenase (gdh1) from Schizosaccharomyces pombe (strain 972 / ATCC 24843) (Fission yeast).